The primary structure comprises 206 residues: Methyltransferase-like 26 (206 aa).

This sequence belongs to the UPF0585 family.

In Danio rerio (Zebrafish), this protein is Methyltransferase-like 26.